Reading from the N-terminus, the 612-residue chain is Cyclin-dependent kinase G1 (612 aa).

Residues 26 to 54 (SRDVYVRQSGRDDERRQIKRPSDHDLRRN) show a composition bias toward basic and acidic residues. Disordered regions lie at residues 26 to 60 (SRDVYVRQSGRDDERRQIKRPSDHDLRRNDGRHRS) and 239 to 278 (CYSSGSGSGHLSVEKLSADGNSGREYYSSDHDELEHEDQD). In terms of domain architecture, Protein kinase spans 297–593 (FQKLNKINEG…VEDALNHGWF (297 aa)). ATP contacts are provided by residues 303–311 (INEGTYGIV) and K326. The residue at position 308 (Y308) is a Phosphotyrosine. Catalysis depends on D426, which acts as the Proton acceptor. S453 bears the Phosphoserine mark. Phosphothreonine is present on T459.

The protein belongs to the protein kinase superfamily. Ser/Thr protein kinase family. In terms of assembly, forms a complex with CYCL1-1. Associated with the spliceosome. Interacts with RS2Z33. In terms of tissue distribution, expressed in leaves and inflorescences. Lower levels of expression in roots and stems.

The protein resides in the nucleus speckle. It carries out the reaction L-seryl-[protein] + ATP = O-phospho-L-seryl-[protein] + ADP + H(+). It catalyses the reaction L-threonyl-[protein] + ATP = O-phospho-L-threonyl-[protein] + ADP + H(+). Its function is as follows. Cyclin-dependent kinase involved in pre-mRNA splicing. Required for the correct splicing of the sixth intron of CALS5 pre-mRNA. May stabilize the binding of U1 snRNP to this rare type of intron with a GC 5'SS. Involved in chromosome pairing and is required for the completion of synapsis in male meiocytes at high ambient temperatures. This is Cyclin-dependent kinase G1 (CDKG1) from Arabidopsis thaliana (Mouse-ear cress).